Consider the following 434-residue polypeptide: Glutamyl-tRNA reductase (434 aa).

Substrate-binding positions include 57–60, serine 116, 121–123, and glutamine 127; these read TCNR and ETQ. Cysteine 58 functions as the Nucleophile in the catalytic mechanism. 196-201 contributes to the NADP(+) binding site; it reads GAGEMI.

It belongs to the glutamyl-tRNA reductase family. Homodimer.

The catalysed reaction is (S)-4-amino-5-oxopentanoate + tRNA(Glu) + NADP(+) = L-glutamyl-tRNA(Glu) + NADPH + H(+). It functions in the pathway porphyrin-containing compound metabolism; protoporphyrin-IX biosynthesis; 5-aminolevulinate from L-glutamyl-tRNA(Glu): step 1/2. In terms of biological role, catalyzes the NADPH-dependent reduction of glutamyl-tRNA(Glu) to glutamate 1-semialdehyde (GSA). This Burkholderia pseudomallei (strain 1106a) protein is Glutamyl-tRNA reductase.